We begin with the raw amino-acid sequence, 261 residues long: MSLLSIITIGLAGLGGLVNGQRDLSVELGVASNFAILAKAGISSVPDSAILGDIGVSPAAATYITGFGLTQDSSTTYATSPQVTGLIYAADYSTPTPNYLAAAVANAETAYNQAAGFVDPDFLELGAGELRDQTLVPGLYKWTSSVSVPTDLTFEGNGDATWVFQIAGGLSLADGVAFTLAGGANSTNIAFQVGDDVTVGKGAHFEGVLLAKRFVTLQTGSSLNGRVLSQTEVALQKATVNSPFVPAPEVVQKRSNARQWL.

The first 20 residues, 1–20 (MSLLSIITIGLAGLGGLVNG), serve as a signal peptide directing secretion. A glycan (N-linked (GlcNAc...) asparagine) is linked at Asn-185.

Belongs to the ice-binding protein family. As to quaternary structure, homodimer. Dimerization is not required for the thermal hysteresis (TH) activity. Post-translationally, glycosylated. Glycosylation is not required for the thermal hysteresis (TH) activity. Glycosylation may increase stability and secretion of this protein.

It localises to the secreted. In terms of biological role, confers freeze tolerance. Binds to the surface of ice crystals and inhibits their growth. Has low thermal hysteresis (TH) activity, which is the ability to lower the freezing point of an aqueous solution below its melting point. The TH activity of this protein is approximately 0.2 degrees Celsius at 50 uM and 0.3 degrees Celsius at 400 uM. The polypeptide is Ice-binding protein (Leucosporidium sp. (strain AY30) (Arctic yeast)).